The sequence spans 211 residues: Shikimate kinase (211 aa).

Over residues 1–13 (MNASANLCAASAN) the composition is skewed to low complexity. The tract at residues 1 to 24 (MNASANLCAASANDPQPGDQEAAH) is disordered. 50-55 (GAGKTT) contributes to the ATP binding site. Thr54 is a Mg(2+) binding site. Substrate is bound by residues Asp72, Arg96, and Gly118. Position 156 (Arg156) interacts with ATP. Arg175 provides a ligand contact to substrate.

It belongs to the shikimate kinase family. As to quaternary structure, monomer. Mg(2+) is required as a cofactor.

The protein localises to the cytoplasm. The enzyme catalyses shikimate + ATP = 3-phosphoshikimate + ADP + H(+). Its pathway is metabolic intermediate biosynthesis; chorismate biosynthesis; chorismate from D-erythrose 4-phosphate and phosphoenolpyruvate: step 5/7. In terms of biological role, catalyzes the specific phosphorylation of the 3-hydroxyl group of shikimic acid using ATP as a cosubstrate. The protein is Shikimate kinase of Bordetella parapertussis (strain 12822 / ATCC BAA-587 / NCTC 13253).